Here is an 829-residue protein sequence, read N- to C-terminus: MKLTLKNFKCYTSATFNFALDSTTLITGPSGQGKSTILLAVQFALFGMTGHRYVISHNKSSCEVVLEYRDFWIKRTKRPNVLLVRWKGQAYQDDEAQVVLHRWFGTTANCSTFFLDLSHVEKMEFLERIANATYNVGELKARVKAHLSTLSRDLAVLDGQIATSNEMAAFVEKPDPIPEPNRDLVEESLRDATQEQVEEVRRQTLRLRSCEVEKSNKHATLQAQRGEIEHELRLLGPANDTVATQIATLEESVARLKAQADQLQADKEARILMEDQSSRLTQYDSVSEAAVSERVERVEQLNRAIADAVTMEQLWELDREQQTAARLLEQERHEWRERLDQAQVELDHIAAELGPDQDGCPEVEQRCHEYWHAKSFNSDHNLPQLKEEMVQIRARLYKPICCTQCHHKMLVNMATWEVKDGDDGPICATTGSGEKGRLQADRKRLQQLETLMGQINHNEAVMASTPIDELTARLQLYRDRETVRERIRQMQTFQPSASLAALEHKIKTNVHFKRKSKSTIALVPLLESVESLRERKCTAVVQLDLMKQQLAAKDKLERQLAHYPSSVVHYSEEAHRSSLDELEVCVGQLADKRLEADRVRTIRRLEAKRAKLQTKLDELNHCPEDLTRHESKLREVNVALEYWARVTEYQSYCARLDKWNQFHASLRDARDRRERMEKQYRTTVTFSRMVCEAEHESLQCVVSVVNSHLEILLQDFFPDCCGDPIQIQLELCHDKQRPQVSATINYKGNRVDYKSLSTGEYARVKLAFDLTFKEILGETIIMLDECTANLDQDLSTKIFQKIISTFPSKTILVVAHQAVAGIFNHVLTL.

This sequence belongs to the IIV-6 050L family.

This is an uncharacterized protein from Invertebrate iridescent virus 3 (IIV-3).